The sequence spans 100 residues: UPF0298 protein lp_2135 (100 aa).

The protein belongs to the UPF0298 family.

It is found in the cytoplasm. The sequence is that of UPF0298 protein lp_2135 from Lactiplantibacillus plantarum (strain ATCC BAA-793 / NCIMB 8826 / WCFS1) (Lactobacillus plantarum).